Here is a 198-residue protein sequence, read N- to C-terminus: MORN repeat-containing protein 4 homolog (198 aa).

A2 is modified (N-acetylalanine). The segment covering Q23–Q45 has biased composition (low complexity). The disordered stretch occupies residues Q23 to Y46. MORN repeat units lie at residues Y64–R87, Y88–A109, Y111–M132, and Y134–D153.

Interacts with ninaC. Post-translationally, phosphorylated under dark conditions and is dephosphorylated by light exposure. As to expression, retina. Expressed primarily in the phototransducing compartment of photoreceptor cells, the rhabdomeres and its expression is dependent on ninaC protein (at protein level).

It localises to the membrane. It is found in the cell projection. The protein resides in the rhabdomere membrane. Plays a role in promoting axonal degeneration following neuronal injury by toxic insult or trauma. Organizes rhabdomeric components to suppress random activation of the phototransduction cascade and thus increases the signaling fidelity of dark-adapted photoreceptors. The rtp/ninaC complex is required for stability of inad and inac and the normal termination of phototransduction in the retina. The chain is MORN repeat-containing protein 4 homolog from Drosophila melanogaster (Fruit fly).